The following is a 197-amino-acid chain: ATP-dependent Clp protease proteolytic subunit (197 aa).

Ser-98 acts as the Nucleophile in catalysis. His-123 is an active-site residue.

This sequence belongs to the peptidase S14 family. Fourteen ClpP subunits assemble into 2 heptameric rings which stack back to back to give a disk-like structure with a central cavity, resembling the structure of eukaryotic proteasomes.

It localises to the cytoplasm. It carries out the reaction Hydrolysis of proteins to small peptides in the presence of ATP and magnesium. alpha-casein is the usual test substrate. In the absence of ATP, only oligopeptides shorter than five residues are hydrolyzed (such as succinyl-Leu-Tyr-|-NHMec, and Leu-Tyr-Leu-|-Tyr-Trp, in which cleavage of the -Tyr-|-Leu- and -Tyr-|-Trp bonds also occurs).. In terms of biological role, cleaves peptides in various proteins in a process that requires ATP hydrolysis. Has a chymotrypsin-like activity. Plays a major role in the degradation of misfolded proteins. The sequence is that of ATP-dependent Clp protease proteolytic subunit from Limosilactobacillus reuteri (strain DSM 20016) (Lactobacillus reuteri).